Reading from the N-terminus, the 617-residue chain is Proline--tRNA ligase (617 aa).

Belongs to the class-II aminoacyl-tRNA synthetase family. ProS type 1 subfamily. Homodimer.

It is found in the cytoplasm. The catalysed reaction is tRNA(Pro) + L-proline + ATP = L-prolyl-tRNA(Pro) + AMP + diphosphate. Functionally, catalyzes the attachment of proline to tRNA(Pro) in a two-step reaction: proline is first activated by ATP to form Pro-AMP and then transferred to the acceptor end of tRNA(Pro). As ProRS can inadvertently accommodate and process non-cognate amino acids such as alanine and cysteine, to avoid such errors it has two additional distinct editing activities against alanine. One activity is designated as 'pretransfer' editing and involves the tRNA(Pro)-independent hydrolysis of activated Ala-AMP. The other activity is designated 'posttransfer' editing and involves deacylation of mischarged Ala-tRNA(Pro). The misacylated Cys-tRNA(Pro) is not edited by ProRS. The protein is Proline--tRNA ligase of Streptococcus agalactiae serotype V (strain ATCC BAA-611 / 2603 V/R).